Here is a 374-residue protein sequence, read N- to C-terminus: Tuliposide A-converting enzyme b1, amyloplastic (374 aa).

An amyloplast-targeting transit peptide spans 1 to 68 (MSVALFCGPP…TNSSLSPSPT (68 aa)). Residue Ser-226 is the Acyl-ester intermediate of the active site. Active-site charge relay system residues include Asp-316 and His-348.

It belongs to the AB hydrolase superfamily. In terms of assembly, homodimer. As to expression, highly expressed in pistil and bulb scales. Lower expression in stem, and barely detected in root, leaf, petal and stamen.

It localises to the plastid. The protein localises to the amyloplast. It catalyses the reaction 6-tuliposide A = tulipalin A + D-glucose. Functionally, lactone-forming carboxylesterases, specifically catalyzing intramolecular transesterification, but not hydrolysis. Involved in the biosynthesis of tulipalins, defensive chemicals that show antimicrobial activities against a broad range of strains of bacteria and fungi. Substrates are 6-tuliposide A &gt; 6-tuliposide B. This Tulipa gesneriana (Garden tulip) protein is Tuliposide A-converting enzyme b1, amyloplastic (TCEA-B1).